We begin with the raw amino-acid sequence, 361 residues long: tRNA N6-adenosine threonylcarbamoyltransferase (361 aa).

Residues His110 and His114 each contribute to the Fe cation site. Substrate is bound by residues 132–136 (LVSGG), Asp165, Gly178, Asp182, and Asn284. Asp312 serves as a coordination point for Fe cation.

This sequence belongs to the KAE1 / TsaD family. The cofactor is Fe(2+).

It localises to the cytoplasm. The enzyme catalyses L-threonylcarbamoyladenylate + adenosine(37) in tRNA = N(6)-L-threonylcarbamoyladenosine(37) in tRNA + AMP + H(+). Functionally, required for the formation of a threonylcarbamoyl group on adenosine at position 37 (t(6)A37) in tRNAs that read codons beginning with adenine. Is involved in the transfer of the threonylcarbamoyl moiety of threonylcarbamoyl-AMP (TC-AMP) to the N6 group of A37, together with TsaE and TsaB. TsaD likely plays a direct catalytic role in this reaction. This Desulfovibrio desulfuricans (strain ATCC 27774 / DSM 6949 / MB) protein is tRNA N6-adenosine threonylcarbamoyltransferase.